The chain runs to 207 residues: Holliday junction branch migration complex subunit RuvA (207 aa).

The domain I stretch occupies residues 1–65; sequence MYDYIRGTLT…ETEHLLYGFH (65 aa). The interval 66-144 is domain II; that stretch reads SREERECFRI…DLLPLDSRVE (79 aa). The interval 145–150 is flexible linker; it reads TSQTHT. Positions 150–207 are domain III; it reads TTSSCLEEGIQALAALGYSKIAAERMIAEAIKDLPEGSSLTDILPIALKKNFSGVNKD.

It belongs to the RuvA family. As to quaternary structure, homotetramer. Forms an RuvA(8)-RuvB(12)-Holliday junction (HJ) complex. HJ DNA is sandwiched between 2 RuvA tetramers; dsDNA enters through RuvA and exits via RuvB. An RuvB hexamer assembles on each DNA strand where it exits the tetramer. Each RuvB hexamer is contacted by two RuvA subunits (via domain III) on 2 adjacent RuvB subunits; this complex drives branch migration. In the full resolvosome a probable DNA-RuvA(4)-RuvB(12)-RuvC(2) complex forms which resolves the HJ.

It localises to the cytoplasm. In terms of biological role, the RuvA-RuvB-RuvC complex processes Holliday junction (HJ) DNA during genetic recombination and DNA repair, while the RuvA-RuvB complex plays an important role in the rescue of blocked DNA replication forks via replication fork reversal (RFR). RuvA specifically binds to HJ cruciform DNA, conferring on it an open structure. The RuvB hexamer acts as an ATP-dependent pump, pulling dsDNA into and through the RuvAB complex. HJ branch migration allows RuvC to scan DNA until it finds its consensus sequence, where it cleaves and resolves the cruciform DNA. The protein is Holliday junction branch migration complex subunit RuvA of Chlamydia pneumoniae (Chlamydophila pneumoniae).